The primary structure comprises 525 residues: Keratin, type II cytoskeletal 4 (525 aa).

Residues Met1–Ala145 are head. Arg13 carries the post-translational modification Omega-N-methylarginine. Positions Glu146 to Leu181 are coil 1A. One can recognise an IF rod domain in the interval Glu146 to Met459. The linker 1 stretch occupies residues Gln182 to Tyr200. The coil 1B stretch occupies residues Ile201–Met292. The segment at Gln293–Ile316 is linker 12. The tract at residues Ile317–Glu455 is coil 2. The interval Glu456–Pro524 is tail.

Belongs to the intermediate filament family. As to quaternary structure, heterotetramer of two type I and two type II keratins. Keratin-4 is generally associated with keratin-13. As to expression, expressed in the dorsal and ventral epithelium of the tongue. Highest expression levels are detected in the suprabasal layer with low levels detected in the basal cell layer. Within the suprabasal layer expression is highest in the spinous cells, decreases in the granular cells and is not detected in the stratum corneum.

The chain is Keratin, type II cytoskeletal 4 (Krt4) from Mus musculus (Mouse).